The primary structure comprises 244 residues: tRNA pseudouridine synthase A (244 aa).

The active-site Nucleophile is Asp52. Tyr110 serves as a coordination point for substrate.

The protein belongs to the tRNA pseudouridine synthase TruA family. As to quaternary structure, homodimer.

It catalyses the reaction uridine(38/39/40) in tRNA = pseudouridine(38/39/40) in tRNA. Formation of pseudouridine at positions 38, 39 and 40 in the anticodon stem and loop of transfer RNAs. The polypeptide is tRNA pseudouridine synthase A (Geotalea uraniireducens (strain Rf4) (Geobacter uraniireducens)).